Here is a 257-residue protein sequence, read N- to C-terminus: Protein patched homolog 1 (257 aa).

Over 1–199 (AKLQTGTAYL…LDDILKSFSD (199 aa)) the chain is Extracellular. 3 N-linked (GlcNAc...) asparagine glycosylation sites follow: asparagine 75, asparagine 114, and asparagine 177. Residues 200-220 (ISVIRVASGYLLMLAYACLTM) form a helical membrane-spanning segment. An SSD domain is found at 201–257 (SVIRVASGYLLMLAYACLTMLRWDCAKSQGAVGLAGVLLVALSVAAGLGLCSLIGIS). Over 221 to 235 (LRWDCAKSQGAVGLA) the chain is Cytoplasmic. The chain crosses the membrane as a helical span at residues 236–256 (GVLLVALSVAAGLGLCSLIGI).

The protein belongs to the patched family. Post-translationally, glycosylation is necessary for SHH binding. In terms of tissue distribution, in the eye, detected in neural retina, iris, retinal pigment epithelium, but not in lens.

It localises to the membrane. In terms of biological role, acts as a receptor for sonic hedgehog (SHH), indian hedgehog (IHH) and desert hedgehog (DHH). Associates with the smoothened protein (SMO) to transduce the hedgehog's proteins signal. This Cynops pyrrhogaster (Japanese fire-bellied newt) protein is Protein patched homolog 1 (PTC1).